The primary structure comprises 261 residues: Glucosamine-6-phosphate deaminase (261 aa).

Residue Asp-67 is the Proton acceptor; for enolization step of the active site. Residue Asp-136 is the For ring-opening step of the active site. His-138 serves as the catalytic Proton acceptor; for ring-opening step. The For ring-opening step role is filled by Glu-143.

It belongs to the glucosamine/galactosamine-6-phosphate isomerase family. NagB subfamily.

The catalysed reaction is alpha-D-glucosamine 6-phosphate + H2O = beta-D-fructose 6-phosphate + NH4(+). Its pathway is amino-sugar metabolism; N-acetylneuraminate degradation; D-fructose 6-phosphate from N-acetylneuraminate: step 5/5. In terms of biological role, catalyzes the reversible isomerization-deamination of glucosamine 6-phosphate (GlcN6P) to form fructose 6-phosphate (Fru6P) and ammonium ion. This Mycolicibacterium smegmatis (strain ATCC 700084 / mc(2)155) (Mycobacterium smegmatis) protein is Glucosamine-6-phosphate deaminase.